Here is a 65-residue protein sequence, read N- to C-terminus: Large ribosomal subunit protein bL35 (65 aa).

Composition is skewed to basic residues over residues 1 to 15 (MPKM…KRFT) and 26 to 44 (QAFK…KRQL). The disordered stretch occupies residues 1–65 (MPKMKTKKSA…KSVRAMMPYA (65 aa)).

The protein belongs to the bacterial ribosomal protein bL35 family.

The chain is Large ribosomal subunit protein bL35 from Cupriavidus metallidurans (strain ATCC 43123 / DSM 2839 / NBRC 102507 / CH34) (Ralstonia metallidurans).